Consider the following 157-residue polypeptide: Protein Smg (157 aa).

The protein belongs to the Smg family.

The protein is Protein Smg of Salmonella agona (strain SL483).